A 130-amino-acid chain; its full sequence is Cysteine methyltransferase (130 aa).

It catalyses the reaction [trehalose-6-phosphate synthase]-L-cysteine + S-adenosyl-L-methionine = [trehalose-6-phosphate synthase]-S-methyl-L-cysteine + S-adenosyl-L-homocysteine + H(+). Its function is as follows. S-adenosyl-L-methionine-dependent protein-cysteine S-methyltransferase with broad substrate specificity. Methylates trehalose-6-phosphate synthase (TPS), enhancing its enzymatic activity and promoting trehalose synthesis upon entry of cells into stationary phase. This is Cysteine methyltransferase from Saccharomyces cerevisiae (Baker's yeast).